The sequence spans 58 residues: uncharacterized protein (58 aa).

This is an uncharacterized protein from Sinorhizobium fredii (strain NBRC 101917 / NGR234).